A 295-amino-acid chain; its full sequence is MVRRLTSPRLEFEAAAIYEYPEHLRSFLNDLPTRPGVYLFHGESDTMPLYIGKSVNIRSRVLSHLRTPDEAAMLRQSRRISWICTAGEIGALLLEARLIKEQQPLFNKRLRRNRQLCALQLNEKRVDVVYAKEVDFSRAPNLFGLFANRRAALQALQTIADEQKLCYGLLGLEPLSRGRACFRSALKRCAGACCGKESHEEHALRLRQSLERLRVVCWPWQGAVALKEQHPEMTQYHIIQNWLWLGAVNSLEEATTLIRTPAGFDHDGYKILCKPLLSGNYEITELDPANDQRAS.

Residues threonine 33–lysine 108 form the GIY-YIG domain.

Incises the DNA at the 3' side of a lesion during nucleotide excision repair. Incises the DNA farther away from the lesion than UvrC. Not able to incise the 5' site of a lesion. In vitro, the incision activity of Cho is UvrA and UvrB dependent. When a lesion remains because UvrC is not able to induce the 3' incision, Cho incises the DNA. Then UvrC makes the 5' incision. The combined action of Cho and UvrC broadens the substrate range of nucleotide excision repair. The chain is Excinuclease cho (cho) from Escherichia coli (strain K12).